The primary structure comprises 276 residues: Putative pyridoxine kinase (276 aa).

N139 contributes to the ATP binding site. E142 is a Mg(2+) binding site. ATP-binding positions include 176–180 (KGGKA), D188, G213, and K238.

Belongs to the ThiD family.

It catalyses the reaction pyridoxal + ATP = pyridoxal 5'-phosphate + ADP + H(+). Functionally, phosphorylates B6 vitamers; functions in a salvage pathway. Uses pyridoxal, pyridoxine, and pyridoxamine as substrates. The protein is Putative pyridoxine kinase (pdxK) of Staphylococcus aureus (strain COL).